Reading from the N-terminus, the 453-residue chain is Probable exopolygalacturonase B (453 aa).

The N-terminal stretch at 1–16 (MKFFALAALFASTVNS) is a signal peptide. N-linked (GlcNAc...) asparagine glycosylation is found at Asn185 and Asn225. Catalysis depends on Asp255, which acts as the Proton donor. Cys257 and Cys274 are joined by a disulfide. Asn263 and Asn275 each carry an N-linked (GlcNAc...) asparagine glycan. The active site involves His278. PbH1 repeat units follow at residues 295–316 (IENVWIENVTLLNGENGARLKA) and 327–348 (INNVTYKNIHVENTDNPIVLDQ). N-linked (GlcNAc...) asparagine glycans are attached at residues Asn302, Asn329, Asn354, and Asn366. The PbH1 3 repeat unit spans residues 362-405 (PSRVNFTNIVFEDIYGTSSGKRGKVVADLTCSPNAVCSGIRLKN). An intrachain disulfide couples Cys392 to Cys398. N-linked (GlcNAc...) asparagine glycosylation occurs at Asn436.

This sequence belongs to the glycosyl hydrolase 28 family.

It is found in the secreted. It carries out the reaction [(1-&gt;4)-alpha-D-galacturonosyl](n) + H2O = alpha-D-galacturonate + [(1-&gt;4)-alpha-D-galacturonosyl](n-1). Its function is as follows. Specific in hydrolyzing the terminal glycosidic bond of polygalacturonic acid and oligogalacturonates. This is Probable exopolygalacturonase B (pgxB) from Aspergillus fumigatus (strain ATCC MYA-4609 / CBS 101355 / FGSC A1100 / Af293) (Neosartorya fumigata).